We begin with the raw amino-acid sequence, 444 residues long: Protein kinase C and casein kinase substrate in neurons protein 1 (444 aa).

Phosphoserine is present on residues Ser-2 and Ser-79. In terms of domain architecture, F-BAR spans 13–283 (EETTDSFWEV…AIRGADAQDD (271 aa)). Residues 26-275 (KRTVKRIDDG…QVYRELEQAI (250 aa)) are a coiled coil. Thr-184 carries the post-translational modification Phosphothreonine. Residues 313–384 (AAKKEKQPKK…NGGSNPFDED (72 aa)) are disordered. The segment covering 314–324 (AKKEKQPKKAE) has biased composition (basic and acidic residues). The segment covering 336-358 (ESTSQAGDRGSVSSYDRGQTYAT) has biased composition (polar residues). A phosphoserine mark is found at Ser-346, Ser-348, Ser-349, Ser-361, and Ser-365. The region spanning 385-444 (AKGVRVRALYDYDGQEQDELSFKAGDELTKLGEEDEQGWCRGRLDSGQLGLYPANYVEVV) is the SH3 domain. Tyr-394 bears the Phosphotyrosine mark. A phosphoserine mark is found at Ser-405 and Ser-430.

It belongs to the PACSIN family. In terms of assembly, homodimer. May form heterooligomers with other PACSINs. Interacts with MAPT. Interacts (via SH3 domain) with SYNJ1 and WASL. Interacts (via SH3 domain) with DNM1; the interaction is reduced by DNM1 phosphorylation. Interacts with DNM2 and DNM3. Interacts with both COBL and DBNL. Identified in a complex composed of COBL, PACSIN1 and WASL. Interacts with EHD1 and EHD3. Interacts with TRPV4. Phosphorylated by casein kinase 2 (CK2) and protein kinase C (PKC).

Its subcellular location is the cytoplasm. The protein localises to the cell projection. The protein resides in the synapse. It localises to the synaptosome. It is found in the ruffle membrane. Its subcellular location is the membrane. The protein localises to the cytoplasmic vesicle membrane. The protein resides in the cytosol. It localises to the cell membrane. Its function is as follows. Binds to membranes via its F-BAR domain and mediates membrane tubulation. Plays a role in the reorganization of the microtubule cytoskeleton via its interaction with MAPT; this decreases microtubule stability and inhibits MAPT-induced microtubule polymerization. Plays a role in cellular transport processes by recruiting DNM1, DNM2 and DNM3 to membranes. Plays a role in the reorganization of the actin cytoskeleton and in neuron morphogenesis via its interaction with COBL and WASL, and by recruiting COBL to the cell cortex. Plays a role in the regulation of neurite formation, neurite branching and the regulation of neurite length. Required for normal synaptic vesicle endocytosis; this process retrieves previously released neurotransmitters to accommodate multiple cycles of neurotransmission. Required for normal excitatory and inhibitory synaptic transmission. This is Protein kinase C and casein kinase substrate in neurons protein 1 (PACSIN1) from Bos taurus (Bovine).